We begin with the raw amino-acid sequence, 416 residues long: Putative nucleoside permease NupX (416 aa).

Residues 1 to 2 lie on the Periplasmic side of the membrane; sequence MD. Residues 3 to 23 traverse the membrane as a helical segment; that stretch reads VMRSVLGMVVLLTIAFLLSVN. The Cytoplasmic segment spans residues 24-31; it reads KKKISLRT. The helical transmembrane segment at 32–52 threads the bilayer; that stretch reads VGAALVLQVVIGGIMLWLPPG. Over 53 to 95 the chain is Periplasmic; sequence RWVAEKVAFGVHKVMAYSDAGSAFIFGSLVGPKMDTLFDGAGF. The chain crosses the membrane as a helical span at residues 96 to 118; it reads IFGFRVLPAIIFVTALVSILYYI. Residues 119 to 172 are Cytoplasmic-facing; the sequence is GVMGILIRILGGIFQKALNISKIESFVAVTTIFLGQNEIPAIVKPFIDRLNRNE. The chain crosses the membrane as a helical span at residues 173 to 193; that stretch reads LFTAICSGMASIAGSTMIGYA. Residues 194 to 196 lie on the Periplasmic side of the membrane; the sequence is ALG. Residues 197-217 traverse the membrane as a helical segment; that stretch reads VPVEYLLAASLMAIPGGILFA. Residues 218-246 are Cytoplasmic-facing; that stretch reads RLLSPATESSQVSFNNLSFTETPPKSIIE. Residues 247 to 267 form a helical membrane-spanning segment; it reads AAATGAMTGLKIAAGVATVVM. Residues 268–352 are Periplasmic-facing; sequence AFVAIIALIN…QTAGTLDAKT (85 aa). The helical transmembrane segment at 353–373 threads the bilayer; it reads VAIISFALCGFANFGSIGVVV. Residues 374–394 lie on the Cytoplasmic side of the membrane; that stretch reads GAFSAVAPHRAPEIAQLGLRA. Residues 395-415 traverse the membrane as a helical segment; the sequence is LAAATLSNLMSATIAGFFIGL. Position 416 (Ala416) is a topological domain, periplasmic.

It belongs to the concentrative nucleoside transporter (CNT) (TC 2.A.41) family.

The protein resides in the cell inner membrane. The sequence is that of Putative nucleoside permease NupX (nupX) from Escherichia coli (strain K12).